A 69-amino-acid chain; its full sequence is Large ribosomal subunit protein uL29 (69 aa).

This sequence belongs to the universal ribosomal protein uL29 family.

The polypeptide is Large ribosomal subunit protein uL29 (Rhodopseudomonas palustris (strain BisB5)).